A 1754-amino-acid polypeptide reads, in one-letter code: Intraflagellar transport protein 172 homolog (1754 aa).

WD repeat units follow at residues 14 to 53 (EQIQRIAGLAWSPNQQRLAIATADRHILLYDDAGERRDKF), 64 to 103 (KNSYVIRGLAFSPDSTKLAVGQSDSIVYVYKLGESWNDKK), 110 to 149 (PQASAVTALIWLTSGSIIAGLEDGKVRALHSKSNKSQSLY), 151 to 190 (GDSICISLAANTKGTGFLSGHNDGTIIRYFMTDEATEPLG), 194 to 232 (QHPVPPFALAWPQGGFCAGGCDQRIVFYDSMGRQLRTFD), 283 to 322 (ACLYTLSSLLWRRDGARLALGSVSGAVLLFESVLRRTVWQ), and 519 to 557 (TLLSNISFVQWVPQSDVVVAQSNSNLAIWYNIDLPEHVT). 11 TPR repeats span residues 623-656 (KAMWHNLALIALEDGNLRVAQRCYAALGNVSKAY), 690-723 (GSDLRTAERIYLEQGDIESALKMYQQLGMWDEAV), 748-781 (SEQQEKAGQVLEEQGDLQQAMSLYMKANKPARAA), 807-840 (SELYELAGDIAHRLSRPEAALALYRKGGAYARAL), 852-885 (TALEEEWGDWLVSRKQLDASINHYIEAGATQKAL), 1041-1074 (RGKLKNAEMHFVASGDWKSAVHMYCSSGRWEDGY), 1140-1166 (DEVHLKIAMSLEDEGKFEAAEAEFLKA), 1167-1199 (NKPREAILMYQHAGDWQAALNVAENHLPDAVGE), 1211-1250 (TSNYKDYEALLLRAHRPDLIIEHYKQESLYEDALRIAEEH), 1282-1315 (SRSYLQKAAEFAKKEQFRKAAECLMQIDSSNAED), and 1698-1733 (FPVRGRQPVTFQGSSNQVNRDVWSKFSVALKMSPGS).

Belongs to the IFT172 family.

The protein localises to the cell projection. Its subcellular location is the cilium. Functionally, required for the maintenance and formation of cilia. The sequence is that of Intraflagellar transport protein 172 homolog from Drosophila melanogaster (Fruit fly).